We begin with the raw amino-acid sequence, 651 residues long: p-hydroxybenzoic acid efflux pump subunit AaeB (651 aa).

Helical transmembrane passes span 11 to 31 (FAFK…HLQL), 41 to 61 (AAIV…SGAI), 67 to 87 (LRII…VLTI), 91 to 111 (VLTL…SSLV), 119 to 139 (FGLA…TPLL), 150 to 170 (EIVL…PRSI), 368 to 388 (LFWL…IAVV), 405 to 425 (FLVG…FIIP), 429 to 449 (QSML…GIEV), 455 to 475 (GSLG…PMIF), and 481 to 501 (LDSA…LLLI).

This sequence belongs to the aromatic acid exporter ArAE (TC 2.A.85) family.

The protein resides in the cell inner membrane. In terms of biological role, forms an efflux pump with AaeA. Could function as a metabolic relief valve, allowing to eliminate certain compounds when they accumulate to high levels in the cell. This Yersinia pseudotuberculosis serotype O:1b (strain IP 31758) protein is p-hydroxybenzoic acid efflux pump subunit AaeB.